A 325-amino-acid polypeptide reads, in one-letter code: Probable transcription factor At4g01260 (325 aa).

The segment at 1–98 (MAPKQLKKIE…SMGEEDVKKK (98 aa)) is disordered. Low complexity-rich tracts occupy residues 23–32 (ASSGESATSG) and 49–69 (KPVV…ESST). The segment covering 73–83 (RSFEKTDEMSK) has biased composition (basic and acidic residues).

The protein belongs to the GeBP family.

This chain is Probable transcription factor At4g01260, found in Arabidopsis thaliana (Mouse-ear cress).